Consider the following 144-residue polypeptide: MAEETSLVADKVPEPAVIDAVADAMPDSLEDALRIVLMKARETNGLICGLSEVTRALDRRTAHLCVLADDCEDEEYKKLVTALAKQNNIDLVSMDEREKLAQWAGLTRMAADGSVRKTLKCSCLAVRDFGERTKALDYLLSQLQ.

The protein belongs to the eukaryotic ribosomal protein eS12 family.

In Trypanosoma brucei brucei, this protein is Small ribosomal subunit protein eS12 (RPS12).